Reading from the N-terminus, the 880-residue chain is MSGSKPDILWAPHHVDRFVVCDSELSLYHIESAASPSSELKAGSLRLSEETTATLLAINSDTPYMKCVAWYPKYDPECLLAVGQANGRVVLTSLGQDHNSKCKDLIGKEFVPKHARQCNTLAWNPQDSNWLAAGLDKHRADFSVLIWDISSKYTPEVAVPAEKVRLAPGDSETCSVVTKPLYELGQNDACLSLCWLPRDQKLLLAGMHRNLAIFDLRNTNQKMFVNTKAVQGVTVDPHFHDRVASFFEGQVAIWDLRKFEKPVLTLTEQPKPLTKVAWCPTRTGLLATLTRDSNIIRLYDMQHTPTPIGDETEPTIIERSVQPCDNYIASFAWHPTSQNRMVVVTPNRSMSDFTVFERISLAWSPTTSLMWACSRQLYECTEEGKGSSSLDRDIATKMRLRALSRYGLDTEQVWRNHLLAGNDDPQLKSLWYTLHFMKQYAEDIDQKSSGNKGLLVYAGIKAITKSSMGTTESFRHSWTGSDRQADIVHYSSEERCLALQLCGWRTKGADSDMGPFLNSLEQEGEWERAAAIALFNRDIRRAIQILNKGASTGKGNLNLNVVAMALSGYTDEKKSLWREMCSTLRLQLNNPYLCVMFAFLTSEPGVYDGVLYENSMAVRDRVAFSCLFLNDAQLSRYFDKLTNEMKEAGNLEGILLTGLTKDGVDLIESYVDRTGDVQTASYCMLQGSPSDVLKDERVQYWIESYRNLLDAWRFWHKRAEFDIHRSKLDPSSKPLAQVFVSCNFCGKSISYSCSSVPHQGRGFSQYGVSGSPTKSKFTSCPGCRKPLPRCALCLINMGNPVSSSPGASKSDEKVDLSKEKKVAKFNNWFTWCHNCRHGGHAGHMLSWFKDHSECPVSACSCKCMQLDTTGNLVPAENVQP.

6 WD repeats span residues Ser-60–Cys-102, Lys-113–Val-157, Gly-185–Phe-224, Asn-226–Leu-264, Glu-268–Gly-309, and Arg-399–Ala-441. A C4-type zinc finger spans residues Val-740–Pro-786. The Zn(2+) site is built by Cys-742, Cys-745, Cys-780, Cys-783, Cys-793, Cys-832, Cys-835, His-837, His-840, His-843, Cys-854, Cys-859, and Cys-863. The segment at Leu-787–Thr-868 adopts an RING-type; atypical zinc-finger fold.

The protein belongs to the WD repeat mio family. In terms of assembly, component of the GATOR2 subcomplex, composed of MIOS, SEC13, SEH1L, WDR24 and WDR59. The GATOR2 complex interacts with CASTOR1 and CASTOR2; the interaction is negatively regulated by arginine. The GATOR2 complex interacts with SESN1, SESN2 and SESN3; the interaction is negatively regulated by amino acids. Interacts with SAR1; the interaction is direct, disrupted by leucine and mediates the interaction of SAR1 with the GATOR2 complex to negatively regulate the TORC1 signaling upon leucine deprivation.

It localises to the lysosome membrane. The GATOR2 complex is negatively regulated by the upstream amino acid sensors CASTOR1 and SESN2, which sequester the GATOR2 complex in absence of amino acids. In the presence of abundant amino acids, GATOR2 is released from CASTOR1 and SESN2 and activated. In terms of biological role, as a component of the GATOR2 complex, functions as an activator of the amino acid-sensing branch of the mTORC1 signaling pathway. The GATOR2 complex indirectly activates mTORC1 through the inhibition of the GATOR1 subcomplex. GATOR2 probably acts as an E3 ubiquitin-protein ligase toward GATOR1. In the presence of abundant amino acids, the GATOR2 complex mediates ubiquitination of the NPRL2 core component of the GATOR1 complex, leading to GATOR1 inactivation. In the absence of amino acids, GATOR2 is inhibited, activating the GATOR1 complex. Within the GATOR2 complex, MIOS is required to prevent autoubiquitination of WDR24, the catalytic subunit of the complex. The polypeptide is GATOR2 complex protein MIOS-A (Xenopus laevis (African clawed frog)).